The sequence spans 356 residues: S-adenosylmethionine:tRNA ribosyltransferase-isomerase (356 aa).

Belongs to the QueA family. As to quaternary structure, monomer.

It localises to the cytoplasm. The enzyme catalyses 7-aminomethyl-7-carbaguanosine(34) in tRNA + S-adenosyl-L-methionine = epoxyqueuosine(34) in tRNA + adenine + L-methionine + 2 H(+). The protein operates within tRNA modification; tRNA-queuosine biosynthesis. Its function is as follows. Transfers and isomerizes the ribose moiety from AdoMet to the 7-aminomethyl group of 7-deazaguanine (preQ1-tRNA) to give epoxyqueuosine (oQ-tRNA). In Shigella boydii serotype 18 (strain CDC 3083-94 / BS512), this protein is S-adenosylmethionine:tRNA ribosyltransferase-isomerase.